Reading from the N-terminus, the 376-residue chain is N-acetyldiaminopimelate deacetylase (376 aa).

Asp69 is an active-site residue. The active-site Proton acceptor is Glu128.

This sequence belongs to the peptidase M20A family. N-acetyldiaminopimelate deacetylase subfamily.

It carries out the reaction N-acetyl-(2S,6S)-2,6-diaminopimelate + H2O = (2S,6S)-2,6-diaminopimelate + acetate. It functions in the pathway amino-acid biosynthesis; L-lysine biosynthesis via DAP pathway; LL-2,6-diaminopimelate from (S)-tetrahydrodipicolinate (acetylase route): step 3/3. Functionally, catalyzes the conversion of N-acetyl-diaminopimelate to diaminopimelate and acetate. The protein is N-acetyldiaminopimelate deacetylase of Bacillus cereus (strain AH820).